The sequence spans 146 residues: UPF0178 protein BC_3040 (146 aa).

It belongs to the UPF0178 family.

In Bacillus cereus (strain ATCC 14579 / DSM 31 / CCUG 7414 / JCM 2152 / NBRC 15305 / NCIMB 9373 / NCTC 2599 / NRRL B-3711), this protein is UPF0178 protein BC_3040.